Consider the following 315-residue polypeptide: Methionyl-tRNA formyltransferase (315 aa).

Residue 113-116 (SILP) participates in (6S)-5,6,7,8-tetrahydrofolate binding.

Belongs to the Fmt family.

It catalyses the reaction L-methionyl-tRNA(fMet) + (6R)-10-formyltetrahydrofolate = N-formyl-L-methionyl-tRNA(fMet) + (6S)-5,6,7,8-tetrahydrofolate + H(+). In terms of biological role, attaches a formyl group to the free amino group of methionyl-tRNA(fMet). The formyl group appears to play a dual role in the initiator identity of N-formylmethionyl-tRNA by promoting its recognition by IF2 and preventing the misappropriation of this tRNA by the elongation apparatus. This Vibrio vulnificus (strain CMCP6) protein is Methionyl-tRNA formyltransferase.